The chain runs to 213 residues: Anti-sigma-E factor ChrR (213 aa).

Residues 2-85 (TIRHHVSDAL…QIQRPAPARR (84 aa)) are sufficient to bind sigma factor and inhibit its activity. Residues His-6, His-31, Cys-35, Cys-38, His-141, His-143, Glu-147, and His-177 each contribute to the Zn(2+) site. Residues 86–194 (ADPRAPAPLA…LDCICLAATD (109 aa)) are required for response to singlet oxygen.

This sequence belongs to the zinc-associated anti-sigma factor (ZAS) superfamily. As to quaternary structure, forms a 1:1 complex with cognate ECF RNA polymerase sigma factor RpoE; this inhibits the interaction of RpoE with the RNA polymerase catalytic core. Zn(2+) serves as cofactor.

In terms of biological role, anti-sigma factor that inhibits the activity of the extracytoplasmic function (ECF) sigma-E factor (RpoE), thereby indirectly regulating the transcription of the cycA and rpoE genes. ECF sigma factors are held in an inactive form by a cognate anti-sigma factor. In Cereibacter sphaeroides (strain ATCC 17023 / DSM 158 / JCM 6121 / CCUG 31486 / LMG 2827 / NBRC 12203 / NCIMB 8253 / ATH 2.4.1.) (Rhodobacter sphaeroides), this protein is Anti-sigma-E factor ChrR (chrR).